The chain runs to 430 residues: Serine--tRNA ligase (430 aa).

An L-serine-binding site is contributed by 237-239; that stretch reads TAE. 268 to 270 contacts ATP; the sequence is RSE. Glutamate 291 provides a ligand contact to L-serine. 355 to 358 is a binding site for ATP; it reads EISS. Serine 391 serves as a coordination point for L-serine.

The protein belongs to the class-II aminoacyl-tRNA synthetase family. Type-1 seryl-tRNA synthetase subfamily. As to quaternary structure, homodimer. The tRNA molecule binds across the dimer.

It is found in the cytoplasm. It catalyses the reaction tRNA(Ser) + L-serine + ATP = L-seryl-tRNA(Ser) + AMP + diphosphate + H(+). It carries out the reaction tRNA(Sec) + L-serine + ATP = L-seryl-tRNA(Sec) + AMP + diphosphate + H(+). The protein operates within aminoacyl-tRNA biosynthesis; selenocysteinyl-tRNA(Sec) biosynthesis; L-seryl-tRNA(Sec) from L-serine and tRNA(Sec): step 1/1. Its function is as follows. Catalyzes the attachment of serine to tRNA(Ser). Is also able to aminoacylate tRNA(Sec) with serine, to form the misacylated tRNA L-seryl-tRNA(Sec), which will be further converted into selenocysteinyl-tRNA(Sec). This is Serine--tRNA ligase from Enterobacter sp. (strain 638).